A 393-amino-acid chain; its full sequence is Formate-dependent phosphoribosylglycinamide formyltransferase (393 aa).

N(1)-(5-phospho-beta-D-ribosyl)glycinamide-binding positions include 22 to 23 and E82; that span reads EL. ATP contacts are provided by residues R114, K155, 160–165, 195–198, and E203; these read SSGKGQ and EGFV. Positions 119–308 constitute an ATP-grasp domain; sequence RLAAEELGLP…EFALHVRAIL (190 aa). 2 residues coordinate Mg(2+): E267 and E279. N(1)-(5-phospho-beta-D-ribosyl)glycinamide is bound by residues D286, K356, and 363 to 364; that span reads RR.

The protein belongs to the PurK/PurT family. Homodimer.

The enzyme catalyses N(1)-(5-phospho-beta-D-ribosyl)glycinamide + formate + ATP = N(2)-formyl-N(1)-(5-phospho-beta-D-ribosyl)glycinamide + ADP + phosphate + H(+). It functions in the pathway purine metabolism; IMP biosynthesis via de novo pathway; N(2)-formyl-N(1)-(5-phospho-D-ribosyl)glycinamide from N(1)-(5-phospho-D-ribosyl)glycinamide (formate route): step 1/1. Its function is as follows. Involved in the de novo purine biosynthesis. Catalyzes the transfer of formate to 5-phospho-ribosyl-glycinamide (GAR), producing 5-phospho-ribosyl-N-formylglycinamide (FGAR). Formate is provided by PurU via hydrolysis of 10-formyl-tetrahydrofolate. This chain is Formate-dependent phosphoribosylglycinamide formyltransferase, found in Nitratidesulfovibrio vulgaris (strain ATCC 29579 / DSM 644 / CCUG 34227 / NCIMB 8303 / VKM B-1760 / Hildenborough) (Desulfovibrio vulgaris).